The chain runs to 258 residues: Acyl-[acyl-carrier-protein]--UDP-N-acetylglucosamine O-acyltransferase (258 aa).

Belongs to the transferase hexapeptide repeat family. LpxA subfamily. In terms of assembly, homotrimer.

The protein resides in the cytoplasm. The catalysed reaction is a (3R)-hydroxyacyl-[ACP] + UDP-N-acetyl-alpha-D-glucosamine = a UDP-3-O-[(3R)-3-hydroxyacyl]-N-acetyl-alpha-D-glucosamine + holo-[ACP]. It functions in the pathway glycolipid biosynthesis; lipid IV(A) biosynthesis; lipid IV(A) from (3R)-3-hydroxytetradecanoyl-[acyl-carrier-protein] and UDP-N-acetyl-alpha-D-glucosamine: step 1/6. Its function is as follows. Involved in the biosynthesis of lipid A, a phosphorylated glycolipid that anchors the lipopolysaccharide to the outer membrane of the cell. The chain is Acyl-[acyl-carrier-protein]--UDP-N-acetylglucosamine O-acyltransferase from Azotobacter vinelandii (strain DJ / ATCC BAA-1303).